We begin with the raw amino-acid sequence, 59 residues long: UPF0339 protein CC_2965 (59 aa).

Belongs to the UPF0339 family.

The protein is UPF0339 protein CC_2965 of Caulobacter vibrioides (strain ATCC 19089 / CIP 103742 / CB 15) (Caulobacter crescentus).